A 462-amino-acid polypeptide reads, in one-letter code: Argininosuccinate lyase (462 aa).

The protein belongs to the lyase 1 family. Argininosuccinate lyase subfamily.

The protein localises to the cytoplasm. The catalysed reaction is 2-(N(omega)-L-arginino)succinate = fumarate + L-arginine. It functions in the pathway amino-acid biosynthesis; L-arginine biosynthesis; L-arginine from L-ornithine and carbamoyl phosphate: step 3/3. The protein is Argininosuccinate lyase of Bacillus mycoides (strain KBAB4) (Bacillus weihenstephanensis).